The sequence spans 387 residues: Protein arginine N-methyltransferase 1 (387 aa).

A disordered region spans residues 1-60; sequence MDQRKGSGSDANGGLAEATASRLRFEDPDEVMEENPAAAAATVGAEEEGGEGGGGEEVIG. Residues 34–44 show a composition bias toward low complexity; it reads ENPAAAAATVG. Residues 66–387 enclose the SAM-dependent MTase PRMT-type domain; the sequence is ADYYFDSYSH…VSRTQHYKMR (322 aa). Positions 79, 88, 112, 134, and 163 each coordinate S-adenosyl-L-methionine. Catalysis depends on residues Glu178 and Glu187.

Belongs to the class I-like SAM-binding methyltransferase superfamily. Protein arginine N-methyltransferase family.

Its subcellular location is the nucleus. The enzyme catalyses L-arginyl-[protein] + S-adenosyl-L-methionine = N(omega)-methyl-L-arginyl-[protein] + S-adenosyl-L-homocysteine + H(+). The catalysed reaction is L-arginyl-[protein] + 2 S-adenosyl-L-methionine = N(omega),N(omega)-dimethyl-L-arginyl-[protein] + 2 S-adenosyl-L-homocysteine + 2 H(+). Arginine methyltransferase that methylates (mono and asymmetric dimethylation) the guanidino nitrogens of arginyl residues present in target proteins. The sequence is that of Protein arginine N-methyltransferase 1 (PRMT1) from Oryza sativa subsp. indica (Rice).